The following is a 640-amino-acid chain: Biosynthetic arginine decarboxylase (640 aa).

Lys105 bears the N6-(pyridoxal phosphate)lysine mark. Residue 290 to 300 (FDVGGGLAVDY) participates in substrate binding.

This sequence belongs to the Orn/Lys/Arg decarboxylase class-II family. SpeA subfamily. Requires Mg(2+) as cofactor. Pyridoxal 5'-phosphate serves as cofactor.

It carries out the reaction L-arginine + H(+) = agmatine + CO2. In terms of biological role, catalyzes the biosynthesis of agmatine from arginine. The sequence is that of Biosynthetic arginine decarboxylase from Vibrio cholerae serotype O1 (strain ATCC 39315 / El Tor Inaba N16961).